The chain runs to 435 residues: Gamma-glutamyl phosphate reductase (435 aa).

It belongs to the gamma-glutamyl phosphate reductase family.

It is found in the cytoplasm. It catalyses the reaction L-glutamate 5-semialdehyde + phosphate + NADP(+) = L-glutamyl 5-phosphate + NADPH + H(+). It functions in the pathway amino-acid biosynthesis; L-proline biosynthesis; L-glutamate 5-semialdehyde from L-glutamate: step 2/2. Functionally, catalyzes the NADPH-dependent reduction of L-glutamate 5-phosphate into L-glutamate 5-semialdehyde and phosphate. The product spontaneously undergoes cyclization to form 1-pyrroline-5-carboxylate. The polypeptide is Gamma-glutamyl phosphate reductase (Aquifex aeolicus (strain VF5)).